Reading from the N-terminus, the 108-residue chain is Cytochrome c-555 (108 aa).

Residues 1–22 (MSRFVSAALVGAALLVSGNAFA) form the signal peptide. 4 residues coordinate heme c: cysteine 36, cysteine 39, histidine 40, and methionine 82.

Binds 1 heme c group covalently per subunit.

In terms of biological role, this basic c-type monoheme cytochrome has been found exclusively in the green photosynthetic bacteria, although its role in bacterial photosynthesis is not established. It has an unusually low redox potential compared with mitochondrial cytochrome c. It is reactive with cytochrome c oxidases but not with reductases. This Chlorobaculum tepidum (strain ATCC 49652 / DSM 12025 / NBRC 103806 / TLS) (Chlorobium tepidum) protein is Cytochrome c-555.